Consider the following 274-residue polypeptide: Rhamnulose-1-phosphate aldolase (274 aa).

The active site involves glutamate 117. Zn(2+)-binding residues include histidine 141, histidine 143, and histidine 212.

It belongs to the aldolase class II family. RhaD subfamily. Homotetramer. Zn(2+) is required as a cofactor.

The protein localises to the cytoplasm. It catalyses the reaction L-rhamnulose 1-phosphate = (S)-lactaldehyde + dihydroxyacetone phosphate. It participates in carbohydrate degradation; L-rhamnose degradation; glycerone phosphate from L-rhamnose: step 3/3. Functionally, catalyzes the reversible cleavage of L-rhamnulose-1-phosphate to dihydroxyacetone phosphate (DHAP) and L-lactaldehyde. The polypeptide is Rhamnulose-1-phosphate aldolase (Escherichia coli O6:H1 (strain CFT073 / ATCC 700928 / UPEC)).